The primary structure comprises 1053 residues: LRR receptor-like serine/threonine-protein kinase GHR1 (1053 aa).

The N-terminal stretch at 1–18 (MNLSRILLLSMFFLSAMG) is a signal peptide. At 19-630 (QLPSQDIMAL…NKSTNKLVKV (612 aa)) the chain is on the extracellular side. 13 LRR repeats span residues 73–93 (GVVLDNLGLTADADFSLFSNL), 94–119 (TKLVKLSMSNNSLSGVLPNDLGSFKS), 121–141 (QFLDLSDNLFSSSLPKEIGRS), 142–165 (VSLRNLSLSGNNFSGEIPESMGGL), 166–189 (ISLQSLDMSSNSLSGPLPKSLTRL), 191–212 (DLLYLNLSSNGFTGKMPRGFEL), 213–237 (ISSLEVLDLHGNSIDGNLDGEFFLL), 239–260 (NASYVDISGNRLVTTSGKLLPG), 262–285 (SESIKHLNLSHNQLEGSLTSGFQL), 286–309 (FQNLKVLDLSYNMLSGELPGFNYV), 310–333 (YDLEVLKLSNNRFSGSLPNNLLKG), 335–357 (SLLLTTLDLSGNNLSGPVSSIMS), and 358–384 (TTLHTLDLSSNSLTGELPLLTGGCVLL). Asparagine 92 is a glycosylation site (N-linked (GlcNAc...) asparagine). Phosphoserine; by HT1 is present on residues serine 100 and serine 102. Asparagine 103 carries an N-linked (GlcNAc...) asparagine glycan. Phosphoserine; by HT1 is present on residues serine 105 and serine 126. N-linked (GlcNAc...) asparagine glycosylation is found at asparagine 146 and asparagine 153. A glycan (N-linked (GlcNAc...) asparagine) is linked at asparagine 196. Asparagine 239 is a glycosylation site (N-linked (GlcNAc...) asparagine). Serine 262 is subject to Phosphoserine; by HT1. N-linked (GlcNAc...) asparagine glycosylation is present at asparagine 269. Phosphoserine; by HT1 is present on serine 278. Threonine 280 is subject to Phosphothreonine; by HT1. At serine 281 the chain carries Phosphoserine; by HT1. Residue serine 325 is modified to Phosphoserine; by HT1. Asparagine 347 carries an N-linked (GlcNAc...) asparagine glycan. N-linked (GlcNAc...) asparagine glycosylation occurs at asparagine 394. LRR repeat units lie at residues 401-425 (WENIEYLDLSQNHFTGSFPDATPQL), 426-449 (LRANHLNLSYNKLTGSLPERIPTH), 450-474 (YPKLRVLDISSNSLEGPIPGALLSM), 476-498 (TLEEIHLQNNGMTGNIGPLPSSG), 499-521 (SRIRLLDLSHNRFDGDLPGVFGS), 522-546 (LTNLQVLNLAANNLSGSLPSSMNDI), 548-570 (SLSSLDVSQNHFTGPLPSNLSSN), and 572-592 (MAFNVSYNDLSGTVPENLKNF). Tyrosine 406 is modified (phosphotyrosine; by HT1). Serine 410 is subject to Phosphoserine; by HT1. At threonine 415 the chain carries Phosphothreonine; by HT1. Serine 417 carries the phosphoserine; by HT1 modification. The N-linked (GlcNAc...) asparagine glycan is linked to asparagine 432. Phosphoserine; by HT1 is present on serine 434. Residues asparagine 534, asparagine 566, and asparagine 575 are each glycosylated (N-linked (GlcNAc...) asparagine). Phosphoserine; by HT1 is present on residues serine 613, serine 614, and serine 616. Asparagine 621 carries an N-linked (GlcNAc...) asparagine glycan. A helical transmembrane segment spans residues 631-651 (VIIVSCAVALIILILVAILLF). Over 652-1053 (CICKSRRREE…KTIYEDLSSI (402 aa)) the chain is Cytoplasmic. Over residues 662–671 (RSITGKETNR) the composition is skewed to basic and acidic residues. The disordered stretch occupies residues 662–684 (RSITGKETNRRAQTIPSGSGGGM). Phosphothreonine; by HT1 occurs at positions 669 and 675. Residues serine 678, serine 680, serine 698, serine 699, and serine 700 each carry the phosphoserine; by HT1 modification. Serine 704 is subject to Phosphoserine. Phosphothreonine; by HT1 is present on threonine 713. Serine 716 and serine 718 each carry phosphoserine; by HT1. Residue threonine 720 is modified to Phosphothreonine; by HT1. A phosphoserine; by HT1 mark is found at serine 721, serine 724, and serine 760. A Phosphothreonine; by HT1 modification is found at threonine 764. Serine 769 is subject to Phosphoserine; by HT1. In terms of domain architecture, Protein kinase spans 770–1053 (RAPAEVLGRS…KTIYEDLSSI (284 aa)). ATP is bound by residues 776-784 (LGRSSHGTS) and lysine 798. 2 positions are modified to phosphothreonine; by HT1: threonine 928 and threonine 1010. At serine 1015 the chain carries Phosphoserine; by HT1. Position 1045 is a phosphothreonine; by HT1 (threonine 1045). Residue tyrosine 1047 is modified to Phosphotyrosine; by HT1. Residues serine 1051 and serine 1052 each carry the phosphoserine; by HT1 modification.

Belongs to the protein kinase superfamily. Ser/Thr protein kinase family. Interacts with SLAC1 (via N-terminus). Binds to ABI2, but not ABI1. Interacts with CPK3. Phosphorylated by HT1; this phosphorylation is inhibited by MPK12 and MPK4. Expressed in guard cells and in the vasculature of roots and leaves.

The protein localises to the cell membrane. The enzyme catalyses L-seryl-[protein] + ATP = O-phospho-L-seryl-[protein] + ADP + H(+). It carries out the reaction L-threonyl-[protein] + ATP = O-phospho-L-threonyl-[protein] + ADP + H(+). Negatively regulated by ABI2. Functionally, receptor kinase acting as an early component in abscisic acid (ABA) signaling. Required for darkness, ABA, high CO(2) and hydrogen peroxide (H(2)O(2)) induction of S-type anion currents in guard cells leading to stomatal closure, possibly via the phosphorylation and activation of the anion channel SLAC1 and as a scaffolding component. Seems to act in parallel with SRK2E/OST1 in the ABA signaling pathway which regulates stomatal movement. Binds ATP. Involved in the local and/or systemic stomatal responses (e.g. stomatal closure) to light stress. The sequence is that of LRR receptor-like serine/threonine-protein kinase GHR1 from Arabidopsis thaliana (Mouse-ear cress).